The sequence spans 850 residues: MSDLPPPDLGSEEISVSPTSSSSSFVPIDKNQLQDAVQVVSEAKEFNSLILDYVRKATPASEVNNNYHIVSVFGSQSTGKSTLLNRLFNTNFDVMDESNRSQTTKGIWMAYSSIITTSQGPVPSKGGENIFVMDVEGTDGRERGEDQDFERKAALFALSTSEVLIINVWEHQIGLYQGANMGLLKTVFEVNLSLFGRTKLEMNEHKVLLLFVIRDHIGTTSKESLAATVTQDLIKMWDSLSKPQELAHLQFSDFFDIQFHTLRHKILQPGEFTTDVQLLGDRFTDHKNEDFLFKKYYHHDIPIDGWTMYAENCWDQIDKNKDLDLPTQQILVAKFKCDEILTSVFEEFRSKFEERHAKYAPTDIKEEVDYEELGGSLGDLKEDTLENYDMMASRYNQSVYLQKRKTLEQKITDVYQDLVDQHGAHMVSKLSAKFASSLSSKKLPKDVSFALATEALRKDIVHQFLKNCSCITLNGSLDHAKHVTSFTRKLDSILSKQRFVELNSILAKSLKKVESAVAKAITQEISEPSESTWDRVLEKFKGAQDEYFYSKYETATGVDFGLGTSASVNERALEKFQFRAWSLLHLQMRKLISKDNLVIILKDRFEDKFRYDENGIPRLYQNSHELELNFTAAKEHALKALPILTLATLSDGTTIVPKYDVRDKRLQKKLGAAFDTTGEVDLKDEDVESDTDEEDEDENEPKCFAEAISETDKASVLSKFKKETDATFVESKRALIQHVTHIPYYIYIVILVLGWNEFMAVLRNPFFFTLLLMLGAGTYVLYHLNLLKPAMVVVQRMFDECLVIAKQKLKEFIDEQPQEHAKRLSKMAGITEDKPEEIEMSDLTPPGEGS.

The segment at 1-27 (MSDLPPPDLGSEEISVSPTSSSSSFVP) is disordered. At 1–741 (MSDLPPPDLG…KRALIQHVTH (741 aa)) the chain is on the cytoplasmic side. Residues 12–27 (EEISVSPTSSSSSFVP) are compositionally biased toward low complexity. One can recognise a GB1/RHD3-type G domain in the interval 64-297 (NNNYHIVSVF…NEDFLFKKYY (234 aa)). 74–81 (GSQSTGKS) contributes to the GTP binding site. Residues 742-762 (IPYYIYIVILVLGWNEFMAVL) form a helical membrane-spanning segment. Topologically, residues 763–765 (RNP) are lumenal. The chain crosses the membrane as a helical span at residues 766–786 (FFFTLLLMLGAGTYVLYHLNL). Residues 787–850 (LKPAMVVVQR…SDLTPPGEGS (64 aa)) lie on the Cytoplasmic side of the membrane. Residues 816–850 (QPQEHAKRLSKMAGITEDKPEEIEMSDLTPPGEGS) form a disordered region.

Belongs to the TRAFAC class dynamin-like GTPase superfamily. GB1/RHD3 GTPase family. RHD3 subfamily.

The protein resides in the endoplasmic reticulum membrane. Cooperates with the reticulon proteins and tubule-shaping DP1 family proteins to generate and maintain the structure of the tubular endoplasmic reticulum network. Has GTPase activity, which is required for its function in ER organization. The sequence is that of Protein SEY1 from Meyerozyma guilliermondii (strain ATCC 6260 / CBS 566 / DSM 6381 / JCM 1539 / NBRC 10279 / NRRL Y-324) (Yeast).